The chain runs to 66 residues: MPKLKTHRGAAKRFKVTGTGKIMRRRANKSHLLTGKPSKRTRHLRQIAQVDETQYKAIRMLIPYKF.

The protein belongs to the bacterial ribosomal protein bL35 family.

The sequence is that of Large ribosomal subunit protein bL35 from Thermodesulfovibrio yellowstonii (strain ATCC 51303 / DSM 11347 / YP87).